We begin with the raw amino-acid sequence, 243 residues long: Phosphoribosylaminoimidazole-succinocarboxamide synthase (243 aa).

Belongs to the SAICAR synthetase family.

It catalyses the reaction 5-amino-1-(5-phospho-D-ribosyl)imidazole-4-carboxylate + L-aspartate + ATP = (2S)-2-[5-amino-1-(5-phospho-beta-D-ribosyl)imidazole-4-carboxamido]succinate + ADP + phosphate + 2 H(+). Its pathway is purine metabolism; IMP biosynthesis via de novo pathway; 5-amino-1-(5-phospho-D-ribosyl)imidazole-4-carboxamide from 5-amino-1-(5-phospho-D-ribosyl)imidazole-4-carboxylate: step 1/2. This Methanobrevibacter smithii (strain ATCC 35061 / DSM 861 / OCM 144 / PS) protein is Phosphoribosylaminoimidazole-succinocarboxamide synthase.